The sequence spans 124 residues: Small ribosomal subunit protein uS12 (124 aa).

The residue at position 89 (aspartate 89) is a 3-methylthioaspartic acid.

This sequence belongs to the universal ribosomal protein uS12 family. Part of the 30S ribosomal subunit. Contacts proteins S8 and S17. May interact with IF1 in the 30S initiation complex.

In terms of biological role, with S4 and S5 plays an important role in translational accuracy. Interacts with and stabilizes bases of the 16S rRNA that are involved in tRNA selection in the A site and with the mRNA backbone. Located at the interface of the 30S and 50S subunits, it traverses the body of the 30S subunit contacting proteins on the other side and probably holding the rRNA structure together. The combined cluster of proteins S8, S12 and S17 appears to hold together the shoulder and platform of the 30S subunit. This Yersinia enterocolitica serotype O:8 / biotype 1B (strain NCTC 13174 / 8081) protein is Small ribosomal subunit protein uS12.